The chain runs to 1358 residues: DNA-directed RNA polymerase subunit beta (1358 aa).

It belongs to the RNA polymerase beta chain family. In terms of assembly, the RNAP catalytic core consists of 2 alpha, 1 beta, 1 beta' and 1 omega subunit. When a sigma factor is associated with the core the holoenzyme is formed, which can initiate transcription.

It carries out the reaction RNA(n) + a ribonucleoside 5'-triphosphate = RNA(n+1) + diphosphate. DNA-dependent RNA polymerase catalyzes the transcription of DNA into RNA using the four ribonucleoside triphosphates as substrates. This Thioalkalivibrio sulfidiphilus (strain HL-EbGR7) protein is DNA-directed RNA polymerase subunit beta.